The chain runs to 160 residues: uncharacterized protein (160 aa).

The signal sequence occupies residues 1–27 (MVIGRKAGIIIYVMHALLLLLLSFTFA).

This is an uncharacterized protein from Aquifex aeolicus (strain VF5).